A 404-amino-acid chain; its full sequence is Probable mannosyltransferase KTR3 (404 aa).

At M1–S27 the chain is on the cytoplasmic side. Residues F28–S44 traverse the membrane as a helical; Signal-anchor for type II membrane protein segment. The interval R45–G83 is stem region. Residues R45–I404 are Lumenal-facing. Positions K84–I404 are catalytic. The Nucleophile role is filled by E295.

Belongs to the glycosyltransferase 15 family. Interacts with SVP26.

It is found in the membrane. Its function is as follows. Possible glycosyltransferase that transfers an alpha-D-mannosyl residue from GDP-mannose into lipid-linked oligosaccharide, forming an alpha-(1-&gt;2)-D-mannosyl-D-mannose linkage. The chain is Probable mannosyltransferase KTR3 (KTR3) from Saccharomyces cerevisiae (strain ATCC 204508 / S288c) (Baker's yeast).